A 141-amino-acid chain; its full sequence is Galactose-6-phosphate isomerase subunit LacA (141 aa).

The protein belongs to the LacAB/RpiB family. Heteromultimeric protein consisting of LacA and LacB.

The enzyme catalyses aldehydo-D-galactose 6-phosphate = keto-D-tagatose 6-phosphate. The protein operates within carbohydrate metabolism; D-galactose 6-phosphate degradation; D-tagatose 6-phosphate from D-galactose 6-phosphate: step 1/1. The protein is Galactose-6-phosphate isomerase subunit LacA of Streptococcus pneumoniae (strain P1031).